A 431-amino-acid polypeptide reads, in one-letter code: Adenylosuccinate lyase (431 aa).

N(6)-(1,2-dicarboxyethyl)-AMP-binding positions include Arg-4–Tyr-5, Arg-67–Asp-69, and Thr-93–Ser-94. The active-site Proton donor/acceptor is the His-141. Gln-212 contributes to the N(6)-(1,2-dicarboxyethyl)-AMP binding site. Ser-262 (proton donor/acceptor) is an active-site residue. N(6)-(1,2-dicarboxyethyl)-AMP is bound by residues Ser-263, Lys-268–Asn-270, Asn-276, and Ser-307–Ile-311.

The protein belongs to the lyase 1 family. Adenylosuccinate lyase subfamily. In terms of assembly, homotetramer. Residues from neighboring subunits contribute catalytic and substrate-binding residues to each active site.

The catalysed reaction is N(6)-(1,2-dicarboxyethyl)-AMP = fumarate + AMP. It catalyses the reaction (2S)-2-[5-amino-1-(5-phospho-beta-D-ribosyl)imidazole-4-carboxamido]succinate = 5-amino-1-(5-phospho-beta-D-ribosyl)imidazole-4-carboxamide + fumarate. The protein operates within purine metabolism; AMP biosynthesis via de novo pathway; AMP from IMP: step 2/2. Its pathway is purine metabolism; IMP biosynthesis via de novo pathway; 5-amino-1-(5-phospho-D-ribosyl)imidazole-4-carboxamide from 5-amino-1-(5-phospho-D-ribosyl)imidazole-4-carboxylate: step 2/2. In terms of biological role, catalyzes two reactions in de novo purine nucleotide biosynthesis. Catalyzes the breakdown of 5-aminoimidazole- (N-succinylocarboxamide) ribotide (SAICAR or 2-[5-amino-1-(5-phospho-beta-D-ribosyl)imidazole-4-carboxamido]succinate) to 5-aminoimidazole-4-carboxamide ribotide (AICAR or 5-amino-1-(5-phospho-beta-D-ribosyl)imidazole-4-carboxamide) and fumarate, and of adenylosuccinate (ADS or N(6)-(1,2-dicarboxyethyl)-AMP) to adenosine monophosphate (AMP) and fumarate. Influences the affinity of glutamyl--tRNA ligase for its substrates and increases its thermostability. The polypeptide is Adenylosuccinate lyase (purB) (Bacillus subtilis (strain 168)).